We begin with the raw amino-acid sequence, 196 residues long: ATP-dependent Clp protease proteolytic subunit (196 aa).

The Nucleophile role is filled by Ser-101. The active site involves His-126.

This sequence belongs to the peptidase S14 family. In terms of assembly, component of the chloroplastic Clp protease core complex.

Its subcellular location is the plastid. It localises to the chloroplast stroma. It carries out the reaction Hydrolysis of proteins to small peptides in the presence of ATP and magnesium. alpha-casein is the usual test substrate. In the absence of ATP, only oligopeptides shorter than five residues are hydrolyzed (such as succinyl-Leu-Tyr-|-NHMec, and Leu-Tyr-Leu-|-Tyr-Trp, in which cleavage of the -Tyr-|-Leu- and -Tyr-|-Trp bonds also occurs).. Cleaves peptides in various proteins in a process that requires ATP hydrolysis. Has a chymotrypsin-like activity. Plays a major role in the degradation of misfolded proteins. The polypeptide is ATP-dependent Clp protease proteolytic subunit (Pinus thunbergii (Japanese black pine)).